Here is a 582-residue protein sequence, read N- to C-terminus: ATP-dependent lipid A-core flippase (582 aa).

5 helical membrane-spanning segments follow: residues 16–36 (LWPT…ALIL), 64–84 (LLWM…TSYI), 153–173 (IIGL…ILVV), 253–273 (PIIQ…ASFP), and 275–295 (VMDS…IALM). The 283-residue stretch at 28 to 310 (IVAGIALILN…LTNVNAQFQR (283 aa)) folds into the ABC transmembrane type-1 domain. One can recognise an ABC transporter domain in the interval 342-578 (LEFRNVTFTY…HGVYAQLHKM (237 aa)). 376–383 (GRSGSGKS) contacts ATP.

This sequence belongs to the ABC transporter superfamily. Lipid exporter (TC 3.A.1.106) family. As to quaternary structure, homodimer.

It localises to the cell inner membrane. It carries out the reaction ATP + H2O + lipid A-core oligosaccharideSide 1 = ADP + phosphate + lipid A-core oligosaccharideSide 2.. Functionally, involved in lipopolysaccharide (LPS) biosynthesis. Translocates lipid A-core from the inner to the outer leaflet of the inner membrane. Transmembrane domains (TMD) form a pore in the inner membrane and the ATP-binding domain (NBD) is responsible for energy generation. This Salmonella choleraesuis (strain SC-B67) protein is ATP-dependent lipid A-core flippase.